The primary structure comprises 427 residues: UDP-N-acetylglucosamine 1-carboxyvinyltransferase (427 aa).

Residue 24-25 (KN) coordinates phosphoenolpyruvate. UDP-N-acetyl-alpha-D-glucosamine is bound at residue arginine 95. Catalysis depends on cysteine 119, which acts as the Proton donor. Cysteine 119 carries the 2-(S-cysteinyl)pyruvic acid O-phosphothioketal modification. UDP-N-acetyl-alpha-D-glucosamine contacts are provided by residues 124–128 (RPVDQ), aspartate 308, and valine 330.

Belongs to the EPSP synthase family. MurA subfamily.

Its subcellular location is the cytoplasm. The catalysed reaction is phosphoenolpyruvate + UDP-N-acetyl-alpha-D-glucosamine = UDP-N-acetyl-3-O-(1-carboxyvinyl)-alpha-D-glucosamine + phosphate. The protein operates within cell wall biogenesis; peptidoglycan biosynthesis. In terms of biological role, cell wall formation. Adds enolpyruvyl to UDP-N-acetylglucosamine. The sequence is that of UDP-N-acetylglucosamine 1-carboxyvinyltransferase from Deinococcus geothermalis (strain DSM 11300 / CIP 105573 / AG-3a).